Here is a 272-residue protein sequence, read N- to C-terminus: ATP phosphoribosyltransferase regulatory subunit (272 aa).

This sequence belongs to the class-II aminoacyl-tRNA synthetase family. HisZ subfamily. In terms of assembly, heteromultimer composed of HisG and HisZ subunits.

Its subcellular location is the cytoplasm. Its pathway is amino-acid biosynthesis; L-histidine biosynthesis; L-histidine from 5-phospho-alpha-D-ribose 1-diphosphate: step 1/9. Functionally, required for the first step of histidine biosynthesis. May allow the feedback regulation of ATP phosphoribosyltransferase activity by histidine. The sequence is that of ATP phosphoribosyltransferase regulatory subunit from Staphylococcus aureus (strain USA300).